Reading from the N-terminus, the 100-residue chain is MTKSELIARIAERNPHLYQRDVERIVSTIFDEIADALARGDRVELRGFGAFSVKRRDARMGRNPRTGETVDVDAKVAPYFKTGKQLRELLNGGESESDDD.

The protein belongs to the bacterial histone-like protein family. In terms of assembly, heterodimer of an alpha and a beta chain.

This protein is one of the two subunits of integration host factor, a specific DNA-binding protein that functions in genetic recombination as well as in transcriptional and translational control. The polypeptide is Integration host factor subunit beta (Rhodospirillum rubrum (strain ATCC 11170 / ATH 1.1.1 / DSM 467 / LMG 4362 / NCIMB 8255 / S1)).